Here is a 434-residue protein sequence, read N- to C-terminus: Enolase (434 aa).

Position 166 (Gln166) interacts with (2R)-2-phosphoglycerate. Glu208 serves as the catalytic Proton donor. Residues Asp245, Glu290, and Asp317 each coordinate Mg(2+). Lys342, Arg371, Ser372, and Lys393 together coordinate (2R)-2-phosphoglycerate. Residue Lys342 is the Proton acceptor of the active site.

It belongs to the enolase family. The cofactor is Mg(2+).

It localises to the cytoplasm. The protein resides in the secreted. The protein localises to the cell surface. It catalyses the reaction (2R)-2-phosphoglycerate = phosphoenolpyruvate + H2O. Its pathway is carbohydrate degradation; glycolysis; pyruvate from D-glyceraldehyde 3-phosphate: step 4/5. Its function is as follows. Catalyzes the reversible conversion of 2-phosphoglycerate (2-PG) into phosphoenolpyruvate (PEP). It is essential for the degradation of carbohydrates via glycolysis. The polypeptide is Enolase (Caldicellulosiruptor bescii (strain ATCC BAA-1888 / DSM 6725 / KCTC 15123 / Z-1320) (Anaerocellum thermophilum)).